The chain runs to 498 residues: Swainsonine transporter swnT (498 aa).

The segment covering 1 to 10 (MSLRNDEQTE) has biased composition (basic and acidic residues). A disordered region spans residues 1–21 (MSLRNDEQTEKGAVVGKVDSQ). Helical transmembrane passes span 42-64 (LSAI…VLGT), 79-99 (LAMA…ISAI), 126-146 (AMIS…AVPV), 167-187 (FVVF…EYFL), and 193-213 (ALLL…FATA). 2 N-linked (GlcNAc...) asparagine glycosylation sites follow: asparagine 227 and asparagine 242. 6 consecutive transmembrane segments (helical) span residues 272–292 (LIWT…AVLV), 316–336 (AAAI…VWSI), 370–390 (PIWS…LYLA), 398–418 (LIAT…ILVL), 436–456 (GFMA…FYCF), and 469–489 (YVSA…FLYA).

This sequence belongs to the amino acid-polyamine-organocation (APC) superfamily. Amino acid/choline transporter (ACT) (TC 2.A.3.4) family.

It is found in the membrane. In terms of biological role, transmembrane transporter; part of the gene cluster that mediates the biosynthesis of swainsonine, a cytotoxic fungal alkaloid and a potential cancer therapy drug. Does not mediate the secretion of SW and the exact role of swnT in SW biosynthesis remains to be determined. This chain is Swainsonine transporter swnT, found in Arthroderma benhamiae (strain ATCC MYA-4681 / CBS 112371) (Trichophyton mentagrophytes).